We begin with the raw amino-acid sequence, 239 residues long: 4-hydroxy-tetrahydrodipicolinate reductase (239 aa).

NAD(+) is bound by residues Gly-12–Met-17, Gly-94–Thr-96, and Ala-118–Phe-121. His-150 (proton donor/acceptor) is an active-site residue. Residue His-151 coordinates (S)-2,3,4,5-tetrahydrodipicolinate. Residue Lys-154 is the Proton donor of the active site. Gly-160–Thr-161 provides a ligand contact to (S)-2,3,4,5-tetrahydrodipicolinate.

The protein belongs to the DapB family.

It is found in the cytoplasm. The catalysed reaction is (S)-2,3,4,5-tetrahydrodipicolinate + NAD(+) + H2O = (2S,4S)-4-hydroxy-2,3,4,5-tetrahydrodipicolinate + NADH + H(+). The enzyme catalyses (S)-2,3,4,5-tetrahydrodipicolinate + NADP(+) + H2O = (2S,4S)-4-hydroxy-2,3,4,5-tetrahydrodipicolinate + NADPH + H(+). The protein operates within amino-acid biosynthesis; L-lysine biosynthesis via DAP pathway; (S)-tetrahydrodipicolinate from L-aspartate: step 4/4. Catalyzes the conversion of 4-hydroxy-tetrahydrodipicolinate (HTPA) to tetrahydrodipicolinate. The protein is 4-hydroxy-tetrahydrodipicolinate reductase of Stenotrophomonas maltophilia (strain K279a).